The following is a 296-amino-acid chain: Protoheme IX farnesyltransferase (296 aa).

9 helical membrane passes run 14 to 34 (IIFG…KGVI), 36 to 56 (YPLF…GCVF), 75 to 95 (VLVK…ILGI), 99 to 119 (LLLY…GFVI), 133 to 153 (VYGT…GYCA), 163 to 183 (LILL…IAIF), 209 to 229 (ITLY…SGYA), 234 to 254 (LVVA…GYKA), and 265 to 285 (FVFS…DFNV).

It belongs to the UbiA prenyltransferase family. Protoheme IX farnesyltransferase subfamily.

The protein resides in the cell inner membrane. The catalysed reaction is heme b + (2E,6E)-farnesyl diphosphate + H2O = Fe(II)-heme o + diphosphate. It functions in the pathway porphyrin-containing compound metabolism; heme O biosynthesis; heme O from protoheme: step 1/1. In terms of biological role, converts heme B (protoheme IX) to heme O by substitution of the vinyl group on carbon 2 of heme B porphyrin ring with a hydroxyethyl farnesyl side group. This Yersinia enterocolitica serotype O:8 / biotype 1B (strain NCTC 13174 / 8081) protein is Protoheme IX farnesyltransferase.